Consider the following 47-residue polypeptide: Bacteriocin curvaticin DN317 (47 aa).

Belongs to the bacteriocin class IIA/YGNGV family.

Its subcellular location is the secreted. Its function is as follows. Has bactericidal activity against various Gram-negative Campylobacter, and the Gram-positive L.monocytogenes and B.subtilis. In vitro, inhibits C.jejuni strain ATCC 33560 (MIC=27.3 ug/ml). This Latilactobacillus curvatus (Lactobacillus curvatus) protein is Bacteriocin curvaticin DN317.